We begin with the raw amino-acid sequence, 475 residues long: Sulfate adenylyltransferase subunit 1 (475 aa).

The 216-residue stretch at 25 to 240 folds into the tr-type G domain; the sequence is KSLLRFLTCG…VLETVEVINL (216 aa). The segment at 34–41 is G1; sequence GSVDDGKS. 34–41 is a GTP binding site; sequence GSVDDGKS. Residues 92 to 96 form a G2 region; sequence GITID. Residues 113–116 form a G3 region; that stretch reads DTPG. Residues 113–117 and 168–171 contribute to the GTP site; these read DTPGH and NKMD. The G4 stretch occupies residues 168–171; it reads NKMD. A G5 region spans residues 206–208; the sequence is SAL.

It belongs to the TRAFAC class translation factor GTPase superfamily. Classic translation factor GTPase family. CysN/NodQ subfamily. Heterodimer composed of CysD, the smaller subunit, and CysN.

The catalysed reaction is sulfate + ATP + H(+) = adenosine 5'-phosphosulfate + diphosphate. Its pathway is sulfur metabolism; hydrogen sulfide biosynthesis; sulfite from sulfate: step 1/3. Functionally, with CysD forms the ATP sulfurylase (ATPS) that catalyzes the adenylation of sulfate producing adenosine 5'-phosphosulfate (APS) and diphosphate, the first enzymatic step in sulfur assimilation pathway. APS synthesis involves the formation of a high-energy phosphoric-sulfuric acid anhydride bond driven by GTP hydrolysis by CysN coupled to ATP hydrolysis by CysD. The chain is Sulfate adenylyltransferase subunit 1 from Sodalis glossinidius (strain morsitans).